The sequence spans 282 residues: Phosphatidylserine decarboxylase proenzyme (282 aa).

Active-site charge relay system; for autoendoproteolytic cleavage activity residues include Asp-88, His-144, and Ser-247. Catalysis depends on Ser-247, which acts as the Schiff-base intermediate with substrate; via pyruvic acid; for decarboxylase activity. Ser-247 carries the pyruvic acid (Ser); by autocatalysis modification.

The protein belongs to the phosphatidylserine decarboxylase family. PSD-B subfamily. Prokaryotic type I sub-subfamily. In terms of assembly, heterodimer of a large membrane-associated beta subunit and a small pyruvoyl-containing alpha subunit. Requires pyruvate as cofactor. In terms of processing, is synthesized initially as an inactive proenzyme. Formation of the active enzyme involves a self-maturation process in which the active site pyruvoyl group is generated from an internal serine residue via an autocatalytic post-translational modification. Two non-identical subunits are generated from the proenzyme in this reaction, and the pyruvate is formed at the N-terminus of the alpha chain, which is derived from the carboxyl end of the proenzyme. The autoendoproteolytic cleavage occurs by a canonical serine protease mechanism, in which the side chain hydroxyl group of the serine supplies its oxygen atom to form the C-terminus of the beta chain, while the remainder of the serine residue undergoes an oxidative deamination to produce ammonia and the pyruvoyl prosthetic group on the alpha chain. During this reaction, the Ser that is part of the protease active site of the proenzyme becomes the pyruvoyl prosthetic group, which constitutes an essential element of the active site of the mature decarboxylase.

The protein resides in the cell membrane. It carries out the reaction a 1,2-diacyl-sn-glycero-3-phospho-L-serine + H(+) = a 1,2-diacyl-sn-glycero-3-phosphoethanolamine + CO2. Its pathway is phospholipid metabolism; phosphatidylethanolamine biosynthesis; phosphatidylethanolamine from CDP-diacylglycerol: step 2/2. Catalyzes the formation of phosphatidylethanolamine (PtdEtn) from phosphatidylserine (PtdSer). The sequence is that of Phosphatidylserine decarboxylase proenzyme from Xanthomonas oryzae pv. oryzae (strain KACC10331 / KXO85).